Here is a 387-residue protein sequence, read N- to C-terminus: Eukaryotic translation initiation factor 3 subunit M (387 aa).

The region spanning 181 to 340 (LSSKVMIELL…HKVHITSTMH (160 aa)) is the PCI domain.

The protein belongs to the eIF-3 subunit M family. Component of the eukaryotic translation initiation factor 3 (eIF-3) complex. The eIF-3 complex interacts with pix.

Its subcellular location is the cytoplasm. The protein resides in the golgi apparatus. Component of the eukaryotic translation initiation factor 3 (eIF-3) complex, which is involved in protein synthesis of a specialized repertoire of mRNAs and, together with other initiation factors, stimulates binding of mRNA and methionyl-tRNAi to the 40S ribosome. The eIF-3 complex specifically targets and initiates translation of a subset of mRNAs involved in cell proliferation. The chain is Eukaryotic translation initiation factor 3 subunit M from Drosophila erecta (Fruit fly).